The following is a 164-amino-acid chain: Peptidyl-prolyl cis-trans isomerase A (164 aa).

Methionine 1 carries the N-acetylmethionine modification. Valine 2 carries the N-acetylvaline; in Peptidyl-prolyl cis-trans isomerase A, N-terminally processed modification. The PPIase cyclophilin-type domain maps to 7 to 163; the sequence is FFDISADGEP…KKITISDCGQ (157 aa). N6-acetyllysine; alternate is present on lysine 28. A Glycyl lysine isopeptide (Lys-Gly) (interchain with G-Cter in SUMO2); alternate cross-link involves residue lysine 28. Residue lysine 28 forms a Glycyl lysine isopeptide (Lys-Gly) (interchain with G-Cter in ubiquitin); alternate linkage. At lysine 44 the chain carries N6-acetyllysine. Serine 77 is modified (phosphoserine). Lysine 82 carries the post-translational modification N6-acetyllysine; alternate. A Glycyl lysine isopeptide (Lys-Gly) (interchain with G-Cter in SUMO2); alternate cross-link involves residue lysine 82. A Phosphothreonine modification is found at threonine 93. Asparagine 108 carries N-linked (GlcNAc...) asparagine glycosylation. N6-acetyllysine is present on residues lysine 125, lysine 131, and lysine 133.

This sequence belongs to the cyclophilin-type PPIase family. PPIase A subfamily. Interacts with protein phosphatase PPP3CA/calcineurin A. Interacts with PRPF19 isoform 2 (via N-terminus). Interacts with isoform 2 of BSG/CD147. Interacts with FOXO1; the interaction promotes FOXO1 dephosphorylation, nuclear accumulation and transcriptional activity. Interacts with integrin ITGA2B:ITGB3; the interaction is ROS and peptidyl-prolyl cis-trans isomerase (PPIase) activity-dependent and is increased in the presence of thrombin. Interacts with MAP3K5. Interacts with TARDBP; the interaction is dependent on the RNA-binding activity of TARDBP and the PPIase activity of PPIA/CYPA and the acetylation of PPIA/CYPA at Lys-125 favors the interaction. Interacts with HNRNPA1, HNRNPA2B1, HNRNPC, RBMX, HNRNPK and HNRNPM. In terms of processing, acetylation at Lys-125 markedly inhibits catalysis of cis to trans isomerization. PPIA acetylation also antagonizes the immunosuppressive effects of cyclosporine by inhibiting the sequential steps of cyclosporine binding and calcineurin inhibition. Acetylation at Lys-125 favors the interaction with TARDBP.

Its subcellular location is the cytoplasm. It is found in the secreted. It localises to the nucleus. The enzyme catalyses [protein]-peptidylproline (omega=180) = [protein]-peptidylproline (omega=0). Its activity is regulated as follows. Binds cyclosporin A (CsA). CsA mediates some of its effects via an inhibitory action on PPIase. Catalyzes the cis-trans isomerization of proline imidic peptide bonds in oligopeptides. Exerts a strong chemotactic effect on leukocytes partly through activation of one of its membrane receptors BSG/CD147, initiating a signaling cascade that culminates in MAPK/ERK activation. Activates endothelial cells (ECs) in a proinflammatory manner by stimulating activation of NF-kappa-B and ERK, JNK and p38 MAP-kinases and by inducing expression of adhesion molecules including SELE and VCAM1. Induces apoptosis in ECs by promoting the FOXO1-dependent expression of CCL2 and BCL2L11 which are involved in EC chemotaxis and apoptosis. In response to oxidative stress, initiates proapoptotic and antiapoptotic signaling in ECs via activation of NF-kappa-B and AKT1 and up-regulation of antiapoptotic protein BCL2. Negatively regulates MAP3K5/ASK1 kinase activity, autophosphorylation and oxidative stress-induced apoptosis mediated by MAP3K5/ASK1. Necessary for the assembly of TARDBP in heterogeneous nuclear ribonucleoprotein (hnRNP) complexes and regulates TARDBP binding to RNA UG repeats and TARDBP-dependent expression of HDAC6, ATG7 and VCP which are involved in clearance of protein aggregates. Plays an important role in platelet activation and aggregation. Regulates calcium mobilization and integrin ITGA2B:ITGB3 bidirectional signaling via increased ROS production as well as by facilitating the interaction between integrin and the cell cytoskeleton. Binds heparan sulfate glycosaminoglycans. In Cricetulus griseus (Chinese hamster), this protein is Peptidyl-prolyl cis-trans isomerase A (PPIA).